A 499-amino-acid polypeptide reads, in one-letter code: Glycerol kinase (499 aa).

Residue T12 participates in ADP binding. 3 residues coordinate ATP: T12, T13, and S14. Residue T12 coordinates sn-glycerol 3-phosphate. Position 16 (R16) interacts with ADP. R82, E83, Y135, and D245 together coordinate sn-glycerol 3-phosphate. 5 residues coordinate glycerol: R82, E83, Y135, D245, and Q246. The ADP site is built by T267 and G310. The ATP site is built by T267, G310, Q314, and G411. Positions 411 and 415 each coordinate ADP.

Belongs to the FGGY kinase family. As to quaternary structure, homotetramer and homodimer (in equilibrium).

It catalyses the reaction glycerol + ATP = sn-glycerol 3-phosphate + ADP + H(+). It participates in polyol metabolism; glycerol degradation via glycerol kinase pathway; sn-glycerol 3-phosphate from glycerol: step 1/1. With respect to regulation, activated by phosphorylation and inhibited by fructose 1,6-bisphosphate (FBP). In terms of biological role, key enzyme in the regulation of glycerol uptake and metabolism. Catalyzes the phosphorylation of glycerol to yield sn-glycerol 3-phosphate. This chain is Glycerol kinase, found in Clostridium beijerinckii (strain ATCC 51743 / NCIMB 8052) (Clostridium acetobutylicum).